We begin with the raw amino-acid sequence, 270 residues long: tRNA pseudouridine synthase A (270 aa).

Asp60 acts as the Nucleophile in catalysis. Tyr118 lines the substrate pocket.

Belongs to the tRNA pseudouridine synthase TruA family. As to quaternary structure, homodimer.

The catalysed reaction is uridine(38/39/40) in tRNA = pseudouridine(38/39/40) in tRNA. In terms of biological role, formation of pseudouridine at positions 38, 39 and 40 in the anticodon stem and loop of transfer RNAs. The chain is tRNA pseudouridine synthase A from Salmonella agona (strain SL483).